The sequence spans 462 residues: B3 domain-containing protein REM8 (462 aa).

3 DNA-binding regions (TF-B3) span residues asparagine 11–serine 103, cysteine 148–arginine 243, and phenylalanine 249–isoleucine 346. Residues phenylalanine 351–valine 419 form a disordered region. Over residues glutamate 369–proline 397 the composition is skewed to basic and acidic residues. The span at arginine 399 to serine 418 shows a compositional bias: polar residues.

The protein localises to the nucleus. This is B3 domain-containing protein REM8 (REM8) from Arabidopsis thaliana (Mouse-ear cress).